Here is a 231-residue protein sequence, read N- to C-terminus: A-type ATP synthase subunit D (231 aa).

Belongs to the V-ATPase D subunit family. As to quaternary structure, has multiple subunits with at least A(3), B(3), C, D, E, F, H, I and proteolipid K(x).

The protein resides in the cell membrane. Its function is as follows. Component of the A-type ATP synthase that produces ATP from ADP in the presence of a proton gradient across the membrane. The polypeptide is A-type ATP synthase subunit D (Methanobrevibacter smithii (strain ATCC 35061 / DSM 861 / OCM 144 / PS)).